The chain runs to 435 residues: 3-phosphoshikimate 1-carboxyvinyltransferase (435 aa).

3-phosphoshikimate-binding residues include Lys22, Ser23, and Arg27. Position 22 (Lys22) interacts with phosphoenolpyruvate. Phosphoenolpyruvate-binding residues include Gly94 and Arg122. 3-phosphoshikimate contacts are provided by Ser166, Gln168, Asp314, and Lys341. Gln168 is a binding site for phosphoenolpyruvate. Catalysis depends on Asp314, which acts as the Proton acceptor. Residues Arg345 and Arg388 each contribute to the phosphoenolpyruvate site.

It belongs to the EPSP synthase family. Monomer.

It is found in the cytoplasm. It catalyses the reaction 3-phosphoshikimate + phosphoenolpyruvate = 5-O-(1-carboxyvinyl)-3-phosphoshikimate + phosphate. The protein operates within metabolic intermediate biosynthesis; chorismate biosynthesis; chorismate from D-erythrose 4-phosphate and phosphoenolpyruvate: step 6/7. Catalyzes the transfer of the enolpyruvyl moiety of phosphoenolpyruvate (PEP) to the 5-hydroxyl of shikimate-3-phosphate (S3P) to produce enolpyruvyl shikimate-3-phosphate and inorganic phosphate. The polypeptide is 3-phosphoshikimate 1-carboxyvinyltransferase (Ruthia magnifica subsp. Calyptogena magnifica).